Reading from the N-terminus, the 683-residue chain is Methionine--tRNA ligase (683 aa).

Positions 15 to 25 (PYANGSIHLGH) match the 'HIGH' region motif. Residues Cys-146, Cys-149, Cys-159, and Cys-162 each coordinate Zn(2+). A 'KMSKS' region motif is present at residues 332-336 (KMSKS). Residue Lys-335 participates in ATP binding. In terms of domain architecture, tRNA-binding spans 582–683 (DFAKVDLRIA…QGAQAGMRVM (102 aa)).

Belongs to the class-I aminoacyl-tRNA synthetase family. MetG type 1 subfamily. As to quaternary structure, homodimer. It depends on Zn(2+) as a cofactor.

The protein localises to the cytoplasm. The catalysed reaction is tRNA(Met) + L-methionine + ATP = L-methionyl-tRNA(Met) + AMP + diphosphate. In terms of biological role, is required not only for elongation of protein synthesis but also for the initiation of all mRNA translation through initiator tRNA(fMet) aminoacylation. The sequence is that of Methionine--tRNA ligase from Vibrio cholerae serotype O1 (strain ATCC 39541 / Classical Ogawa 395 / O395).